The following is a 176-amino-acid chain: MILANDELKKLISTGRLKVDPLAPDTVRENGLDLRIGGEYAIYAYEGAVVKPCELENARHLFRIVKADEVVIPPRNFVLLTTEEYVKMPDDVVGLANLRSTLARYGLVIPPTVVDAGFEGNITIEVVNESPNTIVLKRGMRFLHLILVKAEGRALYSGTYQGQRGVTPPKGLRGEC.

Residues 99–104 and aspartate 115 contribute to the dCTP site; that span reads RSTLAR. Residue glutamate 125 is the Proton donor/acceptor of the active site. Glutamine 163 lines the dCTP pocket.

Belongs to the dCTP deaminase family. Homotrimer.

It carries out the reaction dCTP + H2O + H(+) = dUTP + NH4(+). Its pathway is pyrimidine metabolism; dUMP biosynthesis; dUMP from dCTP (dUTP route): step 1/2. In terms of biological role, catalyzes the deamination of dCTP to dUTP. The polypeptide is dCTP deaminase (Pyrobaculum islandicum (strain DSM 4184 / JCM 9189 / GEO3)).